The sequence spans 250 residues: Isoprenyl transferase (250 aa).

Aspartate 27 is a catalytic residue. Aspartate 27 serves as a coordination point for Mg(2+). Substrate contacts are provided by residues glycine 28–arginine 31, tryptophan 32, histidine 48, and serine 76–glutamate 78. The Proton acceptor role is filled by asparagine 79. Residues phenylalanine 80, arginine 82, arginine 199, and arginine 205 to serine 207 contribute to the substrate site. Glutamate 218 contacts Mg(2+).

This sequence belongs to the UPP synthase family. As to quaternary structure, homodimer. It depends on Mg(2+) as a cofactor.

In terms of biological role, catalyzes the condensation of isopentenyl diphosphate (IPP) with allylic pyrophosphates generating different type of terpenoids. In Chlamydia caviae (strain ATCC VR-813 / DSM 19441 / 03DC25 / GPIC) (Chlamydophila caviae), this protein is Isoprenyl transferase.